We begin with the raw amino-acid sequence, 144 residues long: MELNNLKPAAGAKHAKRRVGRGIGSGLGKTAGRGHKGQKSRSGGFHKVGFEGGQMPLQRRLPKRGFTSLTKEFVGEVRLGDLEKLPVDEIDLLALKQAGLVGELTKSAKIIATGELKRKIVVKGLGATKSARAAIEAAGGSFAE.

The disordered stretch occupies residues 1-56; that stretch reads MELNNLKPAAGAKHAKRRVGRGIGSGLGKTAGRGHKGQKSRSGGFHKVGFEGGQMP. A compositionally biased stretch (gly residues) spans 21 to 31; the sequence is RGIGSGLGKTA.

Belongs to the universal ribosomal protein uL15 family. As to quaternary structure, part of the 50S ribosomal subunit.

Its function is as follows. Binds to the 23S rRNA. This is Large ribosomal subunit protein uL15 from Burkholderia multivorans (strain ATCC 17616 / 249).